The following is a 136-amino-acid chain: Nuclear receptor 2C2-associated protein (136 aa).

Belongs to the NR2C2AP family.

It localises to the nucleus. In terms of biological role, may act as a repressor of nr2c2-mediated transactivation by suppressing the binding between nr2c2 and its response element in target genes. The polypeptide is Nuclear receptor 2C2-associated protein (nr2c2ap) (Xenopus laevis (African clawed frog)).